A 337-amino-acid chain; its full sequence is Glyceraldehyde-3-phosphate dehydrogenase (337 aa).

Residues 12-13 (RI), D34, and R79 each bind NAD(+). D-glyceraldehyde 3-phosphate-binding positions include 150–152 (SCT), T181, 210–211 (TG), and R233. C151 functions as the Nucleophile in the catalytic mechanism. Position 315 (N315) interacts with NAD(+).

The protein belongs to the glyceraldehyde-3-phosphate dehydrogenase family. In terms of assembly, homotetramer.

It localises to the cytoplasm. It carries out the reaction D-glyceraldehyde 3-phosphate + phosphate + NAD(+) = (2R)-3-phospho-glyceroyl phosphate + NADH + H(+). It participates in carbohydrate degradation; glycolysis; pyruvate from D-glyceraldehyde 3-phosphate: step 1/5. This is Glyceraldehyde-3-phosphate dehydrogenase (GPD) from Omphalotus olearius (Jack o'lantern).